A 355-amino-acid chain; its full sequence is DNA polymerase IV (355 aa).

The UmuC domain occupies 7–188 (IIHIDMDCFY…LPLSKIPGVG (182 aa)). The Mg(2+) site is built by Asp-11 and Asp-106. Glu-107 is a catalytic residue.

It belongs to the DNA polymerase type-Y family. In terms of assembly, monomer. Requires Mg(2+) as cofactor.

The protein resides in the cytoplasm. It carries out the reaction DNA(n) + a 2'-deoxyribonucleoside 5'-triphosphate = DNA(n+1) + diphosphate. Its function is as follows. Poorly processive, error-prone DNA polymerase involved in untargeted mutagenesis. Copies undamaged DNA at stalled replication forks, which arise in vivo from mismatched or misaligned primer ends. These misaligned primers can be extended by PolIV. Exhibits no 3'-5' exonuclease (proofreading) activity. May be involved in translesional synthesis, in conjunction with the beta clamp from PolIII. The chain is DNA polymerase IV from Mannheimia succiniciproducens (strain KCTC 0769BP / MBEL55E).